The chain runs to 290 residues: Small ribosomal subunit biogenesis GTPase RsgA (290 aa).

Residues 63-220 form the CP-type G domain; the sequence is KNELIRPPIA…IADTPGFSNL (158 aa). Residues 112-115 and 162-170 contribute to the GTP site; these read NKFD and GPSGVGKST. Residues C244, C249, H251, and C257 each coordinate Zn(2+).

Belongs to the TRAFAC class YlqF/YawG GTPase family. RsgA subfamily. As to quaternary structure, monomer. Associates with 30S ribosomal subunit, binds 16S rRNA. It depends on Zn(2+) as a cofactor.

The protein localises to the cytoplasm. One of several proteins that assist in the late maturation steps of the functional core of the 30S ribosomal subunit. Helps release RbfA from mature subunits. May play a role in the assembly of ribosomal proteins into the subunit. Circularly permuted GTPase that catalyzes slow GTP hydrolysis, GTPase activity is stimulated by the 30S ribosomal subunit. The chain is Small ribosomal subunit biogenesis GTPase RsgA from Carboxydothermus hydrogenoformans (strain ATCC BAA-161 / DSM 6008 / Z-2901).